A 395-amino-acid polypeptide reads, in one-letter code: 8-amino-7-oxononanoate synthase (395 aa).

Residue Arg24 participates in substrate binding. Residue 111-112 (GF) coordinates pyridoxal 5'-phosphate. His136 is a binding site for substrate. Pyridoxal 5'-phosphate is bound by residues Ser184, 209 to 212 (DDAH), and 240 to 243 (TLSK). Position 243 is an N6-(pyridoxal phosphate)lysine (Lys243). Thr357 lines the substrate pocket.

Belongs to the class-II pyridoxal-phosphate-dependent aminotransferase family. BioF subfamily. Homodimer. Pyridoxal 5'-phosphate serves as cofactor.

The catalysed reaction is 6-carboxyhexanoyl-[ACP] + L-alanine + H(+) = (8S)-8-amino-7-oxononanoate + holo-[ACP] + CO2. It functions in the pathway cofactor biosynthesis; biotin biosynthesis. Catalyzes the decarboxylative condensation of pimeloyl-[acyl-carrier protein] and L-alanine to produce 8-amino-7-oxononanoate (AON), [acyl-carrier protein], and carbon dioxide. This is 8-amino-7-oxononanoate synthase from Thermoanaerobacter pseudethanolicus (strain ATCC 33223 / 39E) (Clostridium thermohydrosulfuricum).